A 323-amino-acid chain; its full sequence is Di/tripeptide transport ATP-binding protein DppF (323 aa).

Residues 5-254 form the ABC transporter domain; it reads LTARDLTRHY…PLHPYTRALL (250 aa). 47-54 provides a ligand contact to ATP; the sequence is GESGCGKS.

The protein belongs to the ABC transporter superfamily. As to quaternary structure, the complex is composed of two ATP-binding proteins (DppD and DppF), two transmembrane proteins (DppB and DppC) and a solute-binding protein (DppA1-A5). Five orthologous SBPs (DppA1-A5) are present in P.aeruginosa, which increases the substrate specificity of the DppBCDF transporter.

The protein localises to the cell inner membrane. The enzyme catalyses a dipeptide(out) + ATP + H2O = a dipeptide(in) + ADP + phosphate + H(+). Part of the ABC transporter DppABCDF involved in the uptake of various di/tripeptides. Is also involved in the uptake of phaseolotoxin, a toxic tripeptide inhibiting the enzyme ornithine carbamoyltransferase. Responsible for energy coupling to the transport system. The protein is Di/tripeptide transport ATP-binding protein DppF of Pseudomonas aeruginosa (strain UCBPP-PA14).